The primary structure comprises 335 residues: Tetraacyldisaccharide 4'-kinase (335 aa).

59–66 (TAGGNGKT) contacts ATP.

This sequence belongs to the LpxK family.

It catalyses the reaction a lipid A disaccharide + ATP = a lipid IVA + ADP + H(+). Its pathway is glycolipid biosynthesis; lipid IV(A) biosynthesis; lipid IV(A) from (3R)-3-hydroxytetradecanoyl-[acyl-carrier-protein] and UDP-N-acetyl-alpha-D-glucosamine: step 6/6. Its function is as follows. Transfers the gamma-phosphate of ATP to the 4'-position of a tetraacyldisaccharide 1-phosphate intermediate (termed DS-1-P) to form tetraacyldisaccharide 1,4'-bis-phosphate (lipid IVA). This chain is Tetraacyldisaccharide 4'-kinase, found in Vibrio parahaemolyticus serotype O3:K6 (strain RIMD 2210633).